Consider the following 182-residue polypeptide: NADH-quinone oxidoreductase subunit I (182 aa).

4Fe-4S ferredoxin-type domains follow at residues 50-82 and 92-121; these read IILSRDPDGDERCVACNLCAVACPVGCISLQKA and EFFRINFSRCIFCGLCEEACPTTAIQMTPD. [4Fe-4S] cluster is bound by residues Cys62, Cys65, Cys68, Cys72, Cys101, Cys104, Cys107, and Cys111.

The protein belongs to the complex I 23 kDa subunit family. In terms of assembly, NDH-1 is composed of 14 different subunits. Subunits NuoA, H, J, K, L, M, N constitute the membrane sector of the complex. [4Fe-4S] cluster is required as a cofactor.

The protein resides in the cell inner membrane. The catalysed reaction is a quinone + NADH + 5 H(+)(in) = a quinol + NAD(+) + 4 H(+)(out). Its function is as follows. NDH-1 shuttles electrons from NADH, via FMN and iron-sulfur (Fe-S) centers, to quinones in the respiratory chain. The immediate electron acceptor for the enzyme in this species is believed to be ubiquinone. Couples the redox reaction to proton translocation (for every two electrons transferred, four hydrogen ions are translocated across the cytoplasmic membrane), and thus conserves the redox energy in a proton gradient. The polypeptide is NADH-quinone oxidoreductase subunit I (Psychrobacter cryohalolentis (strain ATCC BAA-1226 / DSM 17306 / VKM B-2378 / K5)).